Reading from the N-terminus, the 396-residue chain is Putative nickel insertion protein (396 aa).

It belongs to the LarC family.

In Methanococcoides burtonii (strain DSM 6242 / NBRC 107633 / OCM 468 / ACE-M), this protein is Putative nickel insertion protein.